A 58-amino-acid polypeptide reads, in one-letter code: U11-ctenitoxin-Pn1b (58 aa).

Intrachain disulfides connect Cys-2–Cys-16, Cys-9–Cys-22, Cys-15–Cys-40, Cys-24–Cys-38, and Cys-48–Cys-55.

In terms of tissue distribution, expressed by the venom gland.

Its subcellular location is the secreted. Its function is as follows. Non-toxic to mice. The polypeptide is U11-ctenitoxin-Pn1b (Phoneutria nigriventer (Brazilian armed spider)).